Consider the following 258-residue polypeptide: Protein IMPACT homolog (258 aa).

In terms of domain architecture, RWD spans 10–114 (EELEAVEAIY…TELDGVLYVE (105 aa)). K187 participates in a covalent cross-link: Glycyl lysine isopeptide (Lys-Gly) (interchain with G-Cter in ubiquitin).

The protein belongs to the IMPACT family. As to quaternary structure, interacts (via N-terminus) with GCN1 (via C-terminus); this interaction reduces the GCN1-GCN20 complex formation and prevents the interaction of GCN1 with GCN2 protein kinase and GCN2 activation in amino acid-starved cells. Interacts (via C-terminus) with ACT1; this interaction occurs in a GCN1-independent manner. Interacts with RPL39; this interaction occurs in a GCN1-independent manner. Associates (via middle region) with ribosomes; this association occurs in a GCN1-independent manner and persists under amino acid starvation conditions.

Its subcellular location is the cytoplasm. The protein localises to the nucleus. Translational regulator that ensures constant high levels of translation under amino acid starvation. Plays a role as a negative regulator of the GCN2 kinase activity; impairs GCN1-mediated GCN2 activation, and hence GCN2-mediated eIF-2-alpha phosphorylation in amino acid-starved cells and subsequent down-regulation of protein synthesis. In normal conditions, it resides in a actin complex and has no activity. This chain is Protein IMPACT homolog (YIH1), found in Saccharomyces cerevisiae (strain ATCC 204508 / S288c) (Baker's yeast).